A 363-amino-acid chain; its full sequence is Fructose-bisphosphate aldolase, muscle type (363 aa).

Positions 56 and 147 each coordinate substrate. Lys230 acts as the Schiff-base intermediate with dihydroxyacetone-P in catalysis.

Belongs to the class I fructose-bisphosphate aldolase family. Homotetramer. As to expression, expressed mainly in the skeletal muscle, heart muscle, brain, and some other tissues, but probably not in liver.

It carries out the reaction beta-D-fructose 1,6-bisphosphate = D-glyceraldehyde 3-phosphate + dihydroxyacetone phosphate. It functions in the pathway carbohydrate degradation; glycolysis; D-glyceraldehyde 3-phosphate and glycerone phosphate from D-glucose: step 4/4. The protein is Fructose-bisphosphate aldolase, muscle type of Lethenteron camtschaticum (Japanese lamprey).